Here is a 124-residue protein sequence, read N- to C-terminus: Small ribosomal subunit protein uS13 (124 aa).

The segment at 98-124 (VRGQRTRCNARTRKGPRKTVGAKRKEK) is disordered.

It belongs to the universal ribosomal protein uS13 family. In terms of assembly, part of the 30S ribosomal subunit. Forms a loose heterodimer with protein S19. Forms two bridges to the 50S subunit in the 70S ribosome.

In terms of biological role, located at the top of the head of the 30S subunit, it contacts several helices of the 16S rRNA. In the 70S ribosome it contacts the 23S rRNA (bridge B1a) and protein L5 of the 50S subunit (bridge B1b), connecting the 2 subunits; these bridges are implicated in subunit movement. Contacts the tRNAs in the A and P-sites. In Dictyoglomus thermophilum (strain ATCC 35947 / DSM 3960 / H-6-12), this protein is Small ribosomal subunit protein uS13.